A 118-amino-acid chain; its full sequence is MKVKNVKPYKRRSLELIEMAIDMTKNREYQLAREYTKLAITYSRKFRFKIPIEYKRSICRKCYVPLVIGLTERRRIKNKVVIRTCLLCGWVRRYELKRDSKEGKGIPPRHKNRQERTQ.

Zn(2+)-binding residues include Cys-59, Cys-62, Cys-85, and Cys-88.

Belongs to the eukaryotic/archaeal RNase P protein component 4 family. As to quaternary structure, consists of a catalytic RNA component and at least 4-5 protein subunits. Zn(2+) is required as a cofactor.

It is found in the cytoplasm. The enzyme catalyses Endonucleolytic cleavage of RNA, removing 5'-extranucleotides from tRNA precursor.. Part of ribonuclease P, a protein complex that generates mature tRNA molecules by cleaving their 5'-ends. This Sulfolobus acidocaldarius (strain ATCC 33909 / DSM 639 / JCM 8929 / NBRC 15157 / NCIMB 11770) protein is Ribonuclease P protein component 4.